Reading from the N-terminus, the 263-residue chain is Endonuclease 8 (263 aa).

Pro2 (schiff-base intermediate with DNA) is an active-site residue. The active-site Proton donor is Glu3. The active-site Proton donor; for beta-elimination activity is the Lys53. Gln70, Arg125, and Asn169 together coordinate DNA. The FPG-type zinc finger occupies 229-263; sequence KVFHRDGEACERCGGIIEKTTLSSRPFYWCAHCQK. Arg253 (proton donor; for delta-elimination activity) is an active-site residue.

It belongs to the FPG family. The cofactor is Zn(2+).

It carries out the reaction 2'-deoxyribonucleotide-(2'-deoxyribose 5'-phosphate)-2'-deoxyribonucleotide-DNA = a 3'-end 2'-deoxyribonucleotide-(2,3-dehydro-2,3-deoxyribose 5'-phosphate)-DNA + a 5'-end 5'-phospho-2'-deoxyribonucleoside-DNA + H(+). Involved in base excision repair of DNA damaged by oxidation or by mutagenic agents. Acts as a DNA glycosylase that recognizes and removes damaged bases. Has a preference for oxidized pyrimidines, such as thymine glycol, 5,6-dihydrouracil and 5,6-dihydrothymine. Has AP (apurinic/apyrimidinic) lyase activity and introduces nicks in the DNA strand. Cleaves the DNA backbone by beta-delta elimination to generate a single-strand break at the site of the removed base with both 3'- and 5'-phosphates. The chain is Endonuclease 8 from Salmonella typhi.